Reading from the N-terminus, the 37-residue chain is Photosystem I reaction center subunit VIII (37 aa).

A helical transmembrane segment spans residues 7–27; that stretch reads LPSIFVPLVGLVFPAIAMASL.

It belongs to the PsaI family.

Its subcellular location is the plastid. It localises to the chloroplast thylakoid membrane. Its function is as follows. May help in the organization of the PsaL subunit. This Populus alba (White poplar) protein is Photosystem I reaction center subunit VIII.